The sequence spans 437 residues: MKVYIETMGCAMNSRDSEHLLSELSKLDYKETNDPKTADLILINTCSVREKPERKLFSEIGQFAKIKKPNAKIGVCGCTASHMGADILKKAPSVSFVLGARNVSKISQVIHKEKAVEVAIDYDESAYAFEFFEKKAQIRSLLNISIGCDKKCAYCIVPHTRGKEISIPMDLILKEAEKLANNGTKELMLLGQNVNNYGARFSSEHAKVDFSDLLDKLSEIQGIERIRFTSPHPLHMNDGFLERFAKNPKVCKSIHMPLQSGSSAVLKMMRRGYSKEWFLNRVERLKALVPEVGISTDIIVGFPNESDKDFEDTMEVLEKVRFDTLYSFIYSPRPFTEAGAWKERVPLEVSSSRLERLQNRHKEILEEKAKLEVGKTHVVLVENRREMDNQIVGFEGRSDTGKFIEVTCKEKRNPGELVKVEIISHSKGRLMAATKGN.

In terms of domain architecture, MTTase N-terminal spans Met1–Ala115. Residues Cys10, Cys46, Cys78, Cys148, Cys152, and Cys155 each coordinate [4Fe-4S] cluster. Positions Lys134–Glu367 constitute a Radical SAM core domain. Residues Lys370 to Gly436 enclose the TRAM domain.

Belongs to the methylthiotransferase family. MiaB subfamily. As to quaternary structure, monomer. Requires [4Fe-4S] cluster as cofactor.

The protein localises to the cytoplasm. The enzyme catalyses N(6)-dimethylallyladenosine(37) in tRNA + (sulfur carrier)-SH + AH2 + 2 S-adenosyl-L-methionine = 2-methylsulfanyl-N(6)-dimethylallyladenosine(37) in tRNA + (sulfur carrier)-H + 5'-deoxyadenosine + L-methionine + A + S-adenosyl-L-homocysteine + 2 H(+). Its function is as follows. Catalyzes the methylthiolation of N6-(dimethylallyl)adenosine (i(6)A), leading to the formation of 2-methylthio-N6-(dimethylallyl)adenosine (ms(2)i(6)A) at position 37 in tRNAs that read codons beginning with uridine. The protein is tRNA-2-methylthio-N(6)-dimethylallyladenosine synthase of Helicobacter pylori (strain ATCC 700392 / 26695) (Campylobacter pylori).